Consider the following 381-residue polypeptide: Metallophosphoesterase 1 (381 aa).

The chain crosses the membrane as a helical span at residues 15–35 (LIFAFVSVFVFCEYVIYYLVI). A divalent metal cation-binding residues include aspartate 59, aspartate 101, asparagine 139, histidine 234, histidine 288, and histidine 290. A helical transmembrane segment spans residues 341-361 (TVLVVYCSSCLIIALITLIHL). The short motif at 377-381 (KHKTL) is the Di-lysine motif element.

It belongs to the metallophosphoesterase superfamily. MPPE1 family. Mn(2+) is required as a cofactor.

Its subcellular location is the endoplasmic reticulum-Golgi intermediate compartment membrane. In terms of biological role, metallophosphoesterase that catalyzes the removal of a side-chain ethanolamine-phosphate (EtNP) from the second mannose of the GPI-anchor protein intermediate. Participates in the glycan remodeling steps of GPI-anchor maturation to allow an efficient transport of GPI-anchor proteins from the endoplasmic reticulum to the Golgi. This is Metallophosphoesterase 1 from Danio rerio (Zebrafish).